The sequence spans 60 residues: Large ribosomal subunit protein bL32 (60 aa).

Residues M1–R16 are compositionally biased toward basic residues. The tract at residues M1 to S60 is disordered. Basic and acidic residues predominate over residues R17 to L44.

Belongs to the bacterial ribosomal protein bL32 family.

This chain is Large ribosomal subunit protein bL32, found in Bradyrhizobium diazoefficiens (strain JCM 10833 / BCRC 13528 / IAM 13628 / NBRC 14792 / USDA 110).